Consider the following 247-residue polypeptide: Uridylate kinase (247 aa).

11 to 14 is a binding site for ATP; the sequence is KASG. The involved in allosteric activation by GTP stretch occupies residues 19 to 24; the sequence is GKQGFG. A UMP-binding site is contributed by Gly-53. Gly-54 and Arg-58 together coordinate ATP. Residues Asp-73 and 134–141 each bind UMP; that span reads TGNPFFTT. ATP contacts are provided by Thr-161, Gln-162, Tyr-167, and Asp-170.

It belongs to the UMP kinase family. As to quaternary structure, homohexamer.

It is found in the cytoplasm. It carries out the reaction UMP + ATP = UDP + ADP. It participates in pyrimidine metabolism; CTP biosynthesis via de novo pathway; UDP from UMP (UMPK route): step 1/1. Its activity is regulated as follows. Allosterically activated by GTP. Inhibited by UTP. Its function is as follows. Catalyzes the reversible phosphorylation of UMP to UDP. This chain is Uridylate kinase, found in Chelativorans sp. (strain BNC1).